A 667-amino-acid chain; its full sequence is Protein adenylyltransferase SelO, mitochondrial (667 aa).

Residues 1 to 6 (MASVRA) constitute a mitochondrion transit peptide. Residues Gly154, Gly156, Lys177, Asp189, Gly190, Arg247, and Arg254 each contribute to the ATP site. The active-site Proton acceptor is Asp341. Asn342 and Asp351 together coordinate Mg(2+). Asp351 is a binding site for ATP. Residues 628 to 652 (YHSEEEATGPEAVARSTEEQSSYSN) form a disordered region. Position 635 is a phosphothreonine (Thr635). A Phosphoserine modification is found at Ser651. A non-standard amino acid (selenocysteine) is located at residue Sec665.

Belongs to the SELO family. The cofactor is Mg(2+).

Its subcellular location is the mitochondrion. It carries out the reaction L-tyrosyl-[protein] + ATP = O-(5'-adenylyl)-L-tyrosyl-[protein] + diphosphate. The catalysed reaction is L-threonyl-[protein] + ATP = 3-O-(5'-adenylyl)-L-threonyl-[protein] + diphosphate. It catalyses the reaction L-seryl-[protein] + ATP = 3-O-(5'-adenylyl)-L-seryl-[protein] + diphosphate. Catalyzes the transfer of adenosine 5'-monophosphate (AMP) to Ser, Thr and Tyr residues of target proteins (AMPylation). May be a redox-active mitochondrial selenoprotein which interacts with a redox target protein. The sequence is that of Protein adenylyltransferase SelO, mitochondrial from Mus musculus (Mouse).